Reading from the N-terminus, the 224-residue chain is Claudin-19 (224 aa).

The Cytoplasmic portion of the chain corresponds to 1–7 (MANSGLQ). The helical transmembrane segment at 8–28 (LLGYFLALGGWVGIIASTALP) threads the bilayer. The Extracellular portion of the chain corresponds to 29–81 (QWKQSSYAGDAIITAVGLYEGLWMSCASQSTGQVQCKLYDSLLALDGHIQSAR). A disulfide bridge connects residues Cys54 and Cys64. The chain crosses the membrane as a helical span at residues 82–102 (ALMVVAVLLGFVAMVLSVVGM). Over 103–117 (KCTRVGDSNPTAKGR) the chain is Cytoplasmic. Residues 118–138 (VAISGGALFLLAGLCTLTAVS) traverse the membrane as a helical segment. Over 139-160 (WYATLVTQEFFNPSTPVNARYE) the chain is Extracellular. Residues 161-181 (FGPALFVGWASAGLAILGGSF) form a helical membrane-spanning segment. Residues 182 to 224 (LCCTCPEPERANSIPQPYRSGPSTAAREPVVKLSTSVKGPLGV) are Cytoplasmic-facing.

Belongs to the claudin family. As to quaternary structure, can form homo- and heteropolymeric tight junction strands. Interacts with other claudins including CLDN3, CLDN10, CLDN16 and CLDN18 with highest affinity for CLDN16. Interacts (via PDZ-binding motif TRV) with TJP1 (via PDZ domain).

It localises to the cell junction. It is found in the tight junction. Its subcellular location is the cell membrane. The catalysed reaction is Mg(2+)(in) = Mg(2+)(out). The enzyme catalyses Ca(2+)(in) = Ca(2+)(out). It carries out the reaction Na(+)(in) = Na(+)(out). It catalyses the reaction K(+)(in) = K(+)(out). The catalysed reaction is Rb(+)(in) = Rb(+)(out). The enzyme catalyses Cs(+)(in) = Cs(+)(out). It carries out the reaction Li(+)(in) = Li(+)(out). Its function is as follows. Forms paracellular channels: coassembles with CLDN16 into tight junction strands with cation-selective channels through the strands, conveying epithelial permeability in a process known as paracellular tight junction permeability. Involved in the maintenance of ion gradients along the nephron. In the thick ascending limb (TAL) of Henle's loop, facilitates sodium paracellular permeability from the interstitial compartment to the lumen, contributing to the lumen-positive transepithelial potential that drives paracellular magnesium and calcium reabsorption. Forms paracellular barriers on its own. In the peripheral nervous system, represents a major constituent of the tight junctions in Schwann cells and contributes to electrical sealing. During retinal neurogenesis, may regulate the barrier properties of tight junctions in retinal pigment epithelium, required for proper retinal tissue differentiation and vision. The protein is Claudin-19 of Rattus norvegicus (Rat).